A 638-amino-acid polypeptide reads, in one-letter code: 1,4-alpha-glucan branching enzyme GlgB (638 aa).

Asp-303 functions as the Nucleophile in the catalytic mechanism. Glu-356 functions as the Proton donor in the catalytic mechanism.

The protein belongs to the glycosyl hydrolase 13 family. GlgB subfamily. Monomer.

The catalysed reaction is Transfers a segment of a (1-&gt;4)-alpha-D-glucan chain to a primary hydroxy group in a similar glucan chain.. Its pathway is glycan biosynthesis; glycogen biosynthesis. Its function is as follows. Catalyzes the formation of the alpha-1,6-glucosidic linkages in glycogen by scission of a 1,4-alpha-linked oligosaccharide from growing alpha-1,4-glucan chains and the subsequent attachment of the oligosaccharide to the alpha-1,6 position. This chain is 1,4-alpha-glucan branching enzyme GlgB, found in Lactobacillus acidophilus (strain ATCC 700396 / NCK56 / N2 / NCFM).